Here is a 464-residue protein sequence, read N- to C-terminus: MCREDWSASIRRRPVRQAVTSDPRARRIRRALLARGSWSETNRVTEILRKETVGGIILLVAAAAALIWANSPWSQSYFALRDFELGGEWLGLHLNLTLGAWAADGLLAIFFLVVGLELKREFVAGDLRDPSRAALPIAAAVGGMVVPALIFVLVNLNTGDGALRGWAIPTATDIAFAVAVLAVISTHLPSALRTFLLTLAVVDDLLAITVIAVFYTDDIKAWALALAVVPLALFTVCAQRGVQKWWLLVPLSVATWVLVHESGVHATVAGVLLGFAVPVHRSATRRGQQVDHAERVGMAEYFEHRVRPISAGIAIPVFAFFAAGVSIGGLSGLSRALGDPITLGIVLGLVAGKPIGILVTTRVLSAVTRASLDSSLRWVDVLGMSMLAGIGFTVSLLIGDLAFGMGSERDEFVKIGVLSGSLLAASLAAIVLLTRNRAYRRIHREETADDDHDGVPDVYQTRQD.

The next 11 membrane-spanning stretches (helical) occupy residues 53 to 73 (VGGI…NSPW), 96 to 116 (LTLG…VVGL), 134 to 154 (ALPI…FVLV), 165 to 185 (GWAI…AVIS), 195 to 215 (FLLT…AVFY), 219 to 239 (IKAW…VCAQ), 257 to 277 (VLVH…GFAV), 313 to 333 (IAIP…LSGL), 340 to 360 (PITL…ILVT), 378 to 398 (WVDV…SLLI), and 412 to 432 (FVKI…AIVL).

It belongs to the NhaA Na(+)/H(+) (TC 2.A.33) antiporter family.

The protein localises to the cell membrane. The catalysed reaction is Na(+)(in) + 2 H(+)(out) = Na(+)(out) + 2 H(+)(in). Functionally, na(+)/H(+) antiporter that extrudes sodium in exchange for external protons. The chain is Na(+)/H(+) antiporter NhaA 2 from Mycolicibacterium vanbaalenii (strain DSM 7251 / JCM 13017 / BCRC 16820 / KCTC 9966 / NRRL B-24157 / PYR-1) (Mycobacterium vanbaalenii).